Here is a 925-residue protein sequence, read N- to C-terminus: Coronin-7 (925 aa).

4 WD repeats span residues 75–115 (CHSD…QALP), 124–163 (PEDL…PLTE), 166–205 (AHGD…QASQ), and 209–253 (AHEN…SALA). 2 disordered regions span residues 196–216 (DPRT…SRDS) and 399–465 (LVPP…SLQS). The segment covering 201-210 (PQASQSTQAH) has biased composition (polar residues). Positions 429–460 (SSPPSSLTSPSTPSSLGPTLSSTSGIGTGPSL) are enriched in low complexity. A phosphoserine mark is found at serine 462 and serine 465. Residue lysine 472 forms a Glycyl lysine isopeptide (Lys-Gly) (interchain with G-Cter in ubiquitin) linkage. 3 WD repeats span residues 542–582 (QNGA…LEEV), 592–632 (GHME…DRLK), and 635–674 (GHQD…EPLQ). Residue lysine 680 forms a Glycyl lysine isopeptide (Lys-Gly) (interchain with G-Cter in ubiquitin) linkage. A WD 8 repeat occupies 728–768 (DVAPSTLVPSYEPRHWPGAPDWQGDARVFLYELLPESPFFM). Positions 857 to 925 (LQPPDMSPVS…FEGVDEDEWD (69 aa)) are disordered. A compositionally biased stretch (low complexity) spans 866–882 (SQAPREAPARRAPSSAQ). Basic and acidic residues predominate over residues 884-896 (LEEKSDQQKKEEL). Phosphoserine is present on serine 915.

It belongs to the WD repeat coronin family. As to quaternary structure, interacts with clathrin adapter AP1 complex. This interaction takes place at Golgi membranes and not AP1-positive endosomal membranes. Interacts (when ubiquitinated at Lys-472) with EPS15. The membrane-associated form is phosphorylated on tyrosine residues. Post-translationally, ubiquitinated via 'Lys-33'-linked ubiquitin chains by the BCR(KLHL20) E3 ubiquitin ligase complex: 'Lys-33'-linked ubiquitination promotes interaction with EPS15 and facilitates actin polymerization at the trans-Golgi network, thereby facilitating post-Golgi trafficking. Deubiquitinated by ZRANB1/TRABID.

The protein resides in the golgi apparatus membrane. It is found in the golgi apparatus. Its subcellular location is the trans-Golgi network. The protein localises to the cytoplasmic vesicle. It localises to the cytoplasm. The protein resides in the cytosol. F-actin regulator involved in anterograde Golgi to endosome transport: upon ubiquitination via 'Lys-33'-linked ubiquitin chains by the BCR(KLHL20) E3 ubiquitin ligase complex, interacts with EPS15 and localizes to the trans-Golgi network, where it promotes actin polymerization, thereby facilitating post-Golgi trafficking. May play a role in the maintenance of the Golgi apparatus morphology. The sequence is that of Coronin-7 (CORO7) from Pongo abelii (Sumatran orangutan).